We begin with the raw amino-acid sequence, 76 residues long: UPF0291 protein Aflv_1503 (76 aa).

Residues 56 to 76 form a disordered region; sequence DPNGNDVTPQKLKDSKKKRLH.

The protein belongs to the UPF0291 family.

Its subcellular location is the cytoplasm. The polypeptide is UPF0291 protein Aflv_1503 (Anoxybacillus flavithermus (strain DSM 21510 / WK1)).